The sequence spans 286 residues: Aldo-keto reductase MAP_4149 (286 aa).

Catalysis depends on tyrosine 61, which acts as the Proton donor. Residues leucine 201, valine 203, valine 239, arginine 241, serine 242, arginine 247, and asparagine 251 each coordinate NADPH.

It belongs to the aldo/keto reductase family.

The chain is Aldo-keto reductase MAP_4149 from Mycolicibacterium paratuberculosis (strain ATCC BAA-968 / K-10) (Mycobacterium paratuberculosis).